The sequence spans 462 residues: ATP synthase subunit beta (462 aa).

151 to 158 (GGAGVGKT) is a binding site for ATP.

This sequence belongs to the ATPase alpha/beta chains family. As to quaternary structure, F-type ATPases have 2 components, CF(1) - the catalytic core - and CF(0) - the membrane proton channel. CF(1) has five subunits: alpha(3), beta(3), gamma(1), delta(1), epsilon(1). CF(0) has four main subunits: a(1), b(1), b'(1) and c(9-12).

It localises to the cell inner membrane. The catalysed reaction is ATP + H2O + 4 H(+)(in) = ADP + phosphate + 5 H(+)(out). Functionally, produces ATP from ADP in the presence of a proton gradient across the membrane. The catalytic sites are hosted primarily by the beta subunits. This is ATP synthase subunit beta from Chlorobium phaeovibrioides (strain DSM 265 / 1930) (Prosthecochloris vibrioformis (strain DSM 265)).